A 374-amino-acid polypeptide reads, in one-letter code: Putative glutamate--cysteine ligase 2 (374 aa).

Belongs to the glutamate--cysteine ligase type 2 family. YbdK subfamily.

The catalysed reaction is L-cysteine + L-glutamate + ATP = gamma-L-glutamyl-L-cysteine + ADP + phosphate + H(+). Functionally, ATP-dependent carboxylate-amine ligase which exhibits weak glutamate--cysteine ligase activity. This Acidovorax sp. (strain JS42) protein is Putative glutamate--cysteine ligase 2.